Consider the following 500-residue polypeptide: Beta-glucosidase 28 (500 aa).

The N-terminal stretch at 1–24 is a signal peptide; that stretch reads MDRRLLLSALLFIALACSSNRVHG. Gln-45 lines the a beta-D-glucoside pocket. Residue Asn-111 is glycosylated (N-linked (GlcNAc...) asparagine). A beta-D-glucoside-binding positions include His-146 and 191–192; that span reads NE. Glu-192 (proton donor) is an active-site residue. An intrachain disulfide couples Cys-211 to Cys-219. Tyr-337 is an a beta-D-glucoside binding site. A glycan (N-linked (GlcNAc...) asparagine) is linked at Asn-362. A beta-D-glucoside is bound at residue Glu-408. Glu-408 acts as the Nucleophile in catalysis. N-linked (GlcNAc...) asparagine glycosylation is found at Asn-409, Asn-415, and Asn-416. A beta-D-glucoside is bound by residues Trp-457, 464 to 465, and Phe-473; that span reads EF.

This sequence belongs to the glycosyl hydrolase 1 family.

It carries out the reaction Hydrolysis of terminal, non-reducing beta-D-glucosyl residues with release of beta-D-glucose.. In Oryza sativa subsp. japonica (Rice), this protein is Beta-glucosidase 28 (BGLU28).